Reading from the N-terminus, the 309-residue chain is Taste receptor type 2 member 43 (309 aa).

M1 is a topological domain (extracellular). Residues 2–22 form a helical membrane-spanning segment; the sequence is ITFLPIIFSSLVVVTFVIGNF. Topologically, residues 23–46 are cytoplasmic; that stretch reads ANGFIALVNSIEWFKRQKISFADQ. Residues 47-67 traverse the membrane as a helical segment; sequence ILTALAVSRVGLLWVLLLNWY. The Extracellular portion of the chain corresponds to 68-86; it reads STVLNPAFNSVEVRTTAYN. A helical transmembrane segment spans residues 87–107; sequence IWAVINHFSNWLATSLSIFYL. Residues 108–126 are Cytoplasmic-facing; the sequence is LKIANFSNFIFLHLKRRVK. A helical membrane pass occupies residues 127–147; it reads SVILVMLLGPLLFLACHLFVI. The Extracellular segment spans residues 148–178; sequence NMNEIVRTKEFEGNMTWKIKLKSAMYFSNMT. 2 N-linked (GlcNAc...) asparagine glycosylation sites follow: N161 and N176. The helical transmembrane segment at 179–199 threads the bilayer; the sequence is VTMVANLVPFTLTLLSFLLLI. Topologically, residues 200–229 are cytoplasmic; it reads CSLCKHLKKMQLHGKGSQDPSTKVHIKVLQ. A helical transmembrane segment spans residues 230–250; that stretch reads TVISFLLLCAIYFLSIMISVW. Residues 251-259 lie on the Extracellular side of the membrane; the sequence is SFGSLKNKP. A helical transmembrane segment spans residues 260–280; it reads VFMFCKAMRFSYPSIHPFILI. Residues 281-309 are Cytoplasmic-facing; sequence WGNKKLKQTFLSVFWQMRYWVKGEKTSSP.

This sequence belongs to the G-protein coupled receptor T2R family.

Its subcellular location is the membrane. The protein localises to the cell projection. It localises to the cilium membrane. Gustducin-coupled receptor immplicated in the perception of bitter compounds in the oral cavity and the gastrointestinal tract. Signals through PLCB2 and the calcium-regulated cation channel TRPM5. Activated by the sulfonyl amide sweeteners saccharin and acesulfame K. In airway epithelial cells, binding of bitter compounds increases the intracellular calcium ion concentration and stimulates ciliary beat frequency. May act as chemosensory receptors in airway epithelial cells to detect and eliminate potential noxious agents from the airways. In Pan troglodytes (Chimpanzee), this protein is Taste receptor type 2 member 43 (TAS2R43).